A 155-amino-acid chain; its full sequence is Protein archease-like (155 aa).

Ca(2+)-binding residues include Asp-26, Asp-154, and Ile-155.

This sequence belongs to the archease family.

Component of the tRNA-splicing ligase complex required to facilitate the enzymatic turnover of catalytic subunit RtcB (F16A11.2). This chain is Protein archease-like, found in Caenorhabditis elegans.